A 202-amino-acid chain; its full sequence is Translation initiation factor IF-3 (202 aa).

Belongs to the IF-3 family. Monomer.

It localises to the cytoplasm. In terms of biological role, IF-3 binds to the 30S ribosomal subunit and shifts the equilibrium between 70S ribosomes and their 50S and 30S subunits in favor of the free subunits, thus enhancing the availability of 30S subunits on which protein synthesis initiation begins. The chain is Translation initiation factor IF-3 from Prochlorococcus marinus (strain NATL2A).